The primary structure comprises 426 residues: GTPase Obg (426 aa).

The Obg domain maps to 1–158 (MFVDQVSVYV…RNIKVELKLI (158 aa)). Disordered stretches follow at residues 66–86 (GKRG…DPLV) and 119–146 (GGRG…GEPG). The 171-residue stretch at 159–329 (ADVGLVGFPS…LLFAIADKLE (171 aa)) folds into the OBG-type G domain. Residues 165-172 (GFPSVGKS), 190-194 (FTTLS), 212-215 (DLPG), 282-285 (NKMD), and 310-312 (SAL) contribute to the GTP site. Ser-172 and Thr-192 together coordinate Mg(2+). Residues 348–426 (RYQKEEDPFH…LLEYEFEFIE (79 aa)) enclose the OCT domain.

Belongs to the TRAFAC class OBG-HflX-like GTPase superfamily. OBG GTPase family. In terms of assembly, monomer. Mg(2+) serves as cofactor.

The protein localises to the cytoplasm. Functionally, an essential GTPase which binds GTP, GDP and possibly (p)ppGpp with moderate affinity, with high nucleotide exchange rates and a fairly low GTP hydrolysis rate. Plays a role in control of the cell cycle, stress response, ribosome biogenesis and in those bacteria that undergo differentiation, in morphogenesis control. The protein is GTPase Obg of Oceanobacillus iheyensis (strain DSM 14371 / CIP 107618 / JCM 11309 / KCTC 3954 / HTE831).